We begin with the raw amino-acid sequence, 655 residues long: Very long-chain specific acyl-CoA dehydrogenase, mitochondrial (655 aa).

The N-terminal 40 residues, 1–40, are a transit peptide targeting the mitochondrion; the sequence is MRAARMAQSTGRQLLRLRGVSSWPGELLGQPRPGPARRPY. Residues 22–66 form a disordered region; it reads SWPGELLGQPRPGPARRPYASGVAQAAVDQSDSQPSEASTREKRA. The tract at residues 41 to 482 is catalytic; that stretch reads ASGVAQAAVD…ALQGCMDKGK (442 aa). A compositionally biased stretch (polar residues) spans 49–59; it reads VDQSDSQPSEA. N6-acetyllysine; alternate is present on K71. K71 is modified (N6-succinyllysine; alternate). K195 carries the post-translational modification N6-succinyllysine. 214–223 is a binding site for FAD; it reads FCLTEPSSGS. C237 carries the post-translational modification S-nitrosocysteine. K239 carries the post-translational modification N6-acetyllysine; alternate. At K239 the chain carries N6-succinyllysine; alternate. FAD is bound at residue 249 to 251; the sequence is WIS. Residues K276 and K278 each carry the N6-acetyllysine; alternate modification. N6-succinyllysine; alternate is present on residues K276 and K278. K298 carries the post-translational modification N6-acetyllysine. The residue at position 331 (K331) is an N6-acetyllysine; alternate. Residue K331 is modified to N6-succinyllysine; alternate. K372 carries the N6-succinyllysine modification. Residue 461 to 463 participates in substrate binding; that stretch reads FEG. E462 functions as the Proton acceptor in the catalytic mechanism. Residue 464-466 coordinates FAD; sequence TND. K482 carries the post-translational modification N6-acetyllysine; alternate. Residue K482 is modified to N6-succinyllysine; alternate. Residues 483–516 are membrane-anchoring; that stretch reads ELSGLGNALKNPFGNAGLLLGEAGKQLRRRAGLG. Residues S517 and S522 each carry the phosphoserine modification. K550 is modified (N6-acetyllysine). N6-acetyllysine; alternate is present on K556. At K556 the chain carries N6-succinyllysine; alternate. Q562 is an FAD binding site. K639 carries the post-translational modification N6-succinyllysine.

This sequence belongs to the acyl-CoA dehydrogenase family. As to quaternary structure, homodimer. Homodimerizes after import into the mitochondrion. FAD is required as a cofactor. Post-translationally, S-nitrosylation at Cys-237 in liver improves catalytic efficiency.

It localises to the mitochondrion inner membrane. It carries out the reaction a very-long-chain 2,3-saturated fatty acyl-CoA + oxidized [electron-transfer flavoprotein] + H(+) = a very-long-chain (2E)-enoyl-CoA + reduced [electron-transfer flavoprotein]. The enzyme catalyses dodecanoyl-CoA + oxidized [electron-transfer flavoprotein] + H(+) = (2E)-dodecenoyl-CoA + reduced [electron-transfer flavoprotein]. The catalysed reaction is tetradecanoyl-CoA + oxidized [electron-transfer flavoprotein] + H(+) = (2E)-tetradecenoyl-CoA + reduced [electron-transfer flavoprotein]. It catalyses the reaction oxidized [electron-transfer flavoprotein] + hexadecanoyl-CoA + H(+) = (2E)-hexadecenoyl-CoA + reduced [electron-transfer flavoprotein]. It carries out the reaction octadecanoyl-CoA + oxidized [electron-transfer flavoprotein] + H(+) = (2E)-octadecenoyl-CoA + reduced [electron-transfer flavoprotein]. The enzyme catalyses eicosanoyl-CoA + oxidized [electron-transfer flavoprotein] + H(+) = (2E)-eicosenoyl-CoA + reduced [electron-transfer flavoprotein]. The catalysed reaction is docosanoyl-CoA + oxidized [electron-transfer flavoprotein] + H(+) = (2E)-docosenoyl-CoA + reduced [electron-transfer flavoprotein]. It catalyses the reaction tetracosanoyl-CoA + oxidized [electron-transfer flavoprotein] + H(+) = (2E)-tetracosenoyl-CoA + reduced [electron-transfer flavoprotein]. It participates in lipid metabolism; mitochondrial fatty acid beta-oxidation. In terms of biological role, very long-chain specific acyl-CoA dehydrogenase is one of the acyl-CoA dehydrogenases that catalyze the first step of mitochondrial fatty acid beta-oxidation, an aerobic process breaking down fatty acids into acetyl-CoA and allowing the production of energy from fats. The first step of fatty acid beta-oxidation consists in the removal of one hydrogen from C-2 and C-3 of the straight-chain fatty acyl-CoA thioester, resulting in the formation of trans-2-enoyl-CoA. Among the different mitochondrial acyl-CoA dehydrogenases, very long-chain specific acyl-CoA dehydrogenase acts specifically on acyl-CoAs with saturated 12 to 24 carbons long primary chains. The polypeptide is Very long-chain specific acyl-CoA dehydrogenase, mitochondrial (Bos taurus (Bovine)).